The primary structure comprises 557 residues: Dihydroxy-acid dehydratase 2 (557 aa).

Residue cysteine 50 coordinates [2Fe-2S] cluster. Aspartate 82 contributes to the Mg(2+) binding site. Cysteine 123 provides a ligand contact to [2Fe-2S] cluster. 2 residues coordinate Mg(2+): aspartate 124 and lysine 125. Position 125 is an N6-carboxylysine (lysine 125). Cysteine 195 contributes to the [2Fe-2S] cluster binding site. Glutamate 447 is a binding site for Mg(2+). Serine 473 functions as the Proton acceptor in the catalytic mechanism.

This sequence belongs to the IlvD/Edd family. In terms of assembly, homodimer. [2Fe-2S] cluster is required as a cofactor. Mg(2+) serves as cofactor.

The catalysed reaction is (2R)-2,3-dihydroxy-3-methylbutanoate = 3-methyl-2-oxobutanoate + H2O. It carries out the reaction (2R,3R)-2,3-dihydroxy-3-methylpentanoate = (S)-3-methyl-2-oxopentanoate + H2O. The protein operates within amino-acid biosynthesis; L-isoleucine biosynthesis; L-isoleucine from 2-oxobutanoate: step 3/4. It functions in the pathway amino-acid biosynthesis; L-valine biosynthesis; L-valine from pyruvate: step 3/4. Functions in the biosynthesis of branched-chain amino acids. Catalyzes the dehydration of (2R,3R)-2,3-dihydroxy-3-methylpentanoate (2,3-dihydroxy-3-methylvalerate) into 2-oxo-3-methylpentanoate (2-oxo-3-methylvalerate) and of (2R)-2,3-dihydroxy-3-methylbutanoate (2,3-dihydroxyisovalerate) into 2-oxo-3-methylbutanoate (2-oxoisovalerate), the penultimate precursor to L-isoleucine and L-valine, respectively. The sequence is that of Dihydroxy-acid dehydratase 2 from Burkholderia lata (strain ATCC 17760 / DSM 23089 / LMG 22485 / NCIMB 9086 / R18194 / 383).